The primary structure comprises 221 residues: MHLKIGTLTIRTIMLFTLCTFLTLFAFSTCFDETKTINLESQEIYDDLFESKEDLQNERNGNSDEYRYMGSNSINDINRYNRLSMQPENEFLQERSLKPAANLPLRFGRTSDDKIAKSIPSFDKIAKSIPNLPQRFGRYLSGKTKVQSMANLPQRFGRAQYTNHFVHSLDTLPLRFGRTPHSDRLQYEMNSHPLELKNPEEDSDRKKRQAMTFRIRTDLQM.

The N-terminal stretch at 1–25 is a signal peptide; it reads MHLKIGTLTIRTIMLFTLCTFLTLF. A propeptide spanning residues 26-95 is cleaved from the precursor; it reads AFSTCFDETK…QPENEFLQER (70 aa). Position 107 is a phenylalanine amide (F107). Residues 110–127 constitute a propeptide that is removed on maturation; it reads TSDDKIAKSIPSFDKIAK. Residues F136, F156, and F176 each carry the phenylalanine amide modification. The propeptide occupies 179–221; the sequence is TPHSDRLQYEMNSHPLELKNPEEDSDRKKRQAMTFRIRTDLQM.

This sequence belongs to the FARP (FMRFamide related peptide) family. In terms of tissue distribution, observed in the suprachiasmatic nucleus and in several telencephalic and diencephalic regions.

The protein resides in the secreted. In terms of biological role, primary role is to release GH from the pituitary. May act as an endogenous ligand in the bullfrog hypothalamo-hypophysial system. The sequence is that of Growth hormone-releasing peptides from Aquarana catesbeiana (American bullfrog).